Consider the following 392-residue polypeptide: 8-amino-7-oxononanoate synthase (392 aa).

Arginine 21 is a substrate binding site. Residue 108 to 109 (GF) coordinates pyridoxal 5'-phosphate. A substrate-binding site is contributed by histidine 133. Residues serine 181, 206–209 (DDAH), and 237–240 (TLSK) each bind pyridoxal 5'-phosphate. Residue lysine 240 is modified to N6-(pyridoxal phosphate)lysine. Position 354 (threonine 354) interacts with substrate.

Belongs to the class-II pyridoxal-phosphate-dependent aminotransferase family. BioF subfamily. Homodimer. The cofactor is pyridoxal 5'-phosphate.

The enzyme catalyses 6-carboxyhexanoyl-[ACP] + L-alanine + H(+) = (8S)-8-amino-7-oxononanoate + holo-[ACP] + CO2. It participates in cofactor biosynthesis; biotin biosynthesis. Its function is as follows. Catalyzes the decarboxylative condensation of pimeloyl-[acyl-carrier protein] and L-alanine to produce 8-amino-7-oxononanoate (AON), [acyl-carrier protein], and carbon dioxide. This Symbiobacterium thermophilum (strain DSM 24528 / JCM 14929 / IAM 14863 / T) protein is 8-amino-7-oxononanoate synthase.